We begin with the raw amino-acid sequence, 69 residues long: Large ribosomal subunit protein bL31 (69 aa).

Zn(2+)-binding residues include cysteine 16, cysteine 18, cysteine 37, and cysteine 40.

The protein belongs to the bacterial ribosomal protein bL31 family. Type A subfamily. Part of the 50S ribosomal subunit. Requires Zn(2+) as cofactor.

Binds the 23S rRNA. The sequence is that of Large ribosomal subunit protein bL31 from Buchnera aphidicola subsp. Cinara cedri (strain Cc).